An 81-amino-acid polypeptide reads, in one-letter code: UPF0298 protein SAK_1599 (81 aa).

Belongs to the UPF0298 family.

It is found in the cytoplasm. The polypeptide is UPF0298 protein SAK_1599 (Streptococcus agalactiae serotype Ia (strain ATCC 27591 / A909 / CDC SS700)).